The primary structure comprises 172 residues: Shikimate kinase (172 aa).

Glycine 14 to threonine 19 is a binding site for ATP. Residue serine 18 coordinates Mg(2+). Substrate-binding residues include aspartate 36, arginine 60, and glycine 82. Residue arginine 120 coordinates ATP. Arginine 140 contacts substrate.

The protein belongs to the shikimate kinase family. Monomer. It depends on Mg(2+) as a cofactor.

Its subcellular location is the cytoplasm. The catalysed reaction is shikimate + ATP = 3-phosphoshikimate + ADP + H(+). The protein operates within metabolic intermediate biosynthesis; chorismate biosynthesis; chorismate from D-erythrose 4-phosphate and phosphoenolpyruvate: step 5/7. In terms of biological role, catalyzes the specific phosphorylation of the 3-hydroxyl group of shikimic acid using ATP as a cosubstrate. The sequence is that of Shikimate kinase from Tolumonas auensis (strain DSM 9187 / NBRC 110442 / TA 4).